The primary structure comprises 909 residues: Phosphoenolpyruvate carboxylase (909 aa).

Active-site residues include histidine 138 and lysine 572.

The protein belongs to the PEPCase type 1 family. Mg(2+) is required as a cofactor.

The enzyme catalyses oxaloacetate + phosphate = phosphoenolpyruvate + hydrogencarbonate. In terms of biological role, forms oxaloacetate, a four-carbon dicarboxylic acid source for the tricarboxylic acid cycle. This chain is Phosphoenolpyruvate carboxylase, found in Lactobacillus delbrueckii subsp. bulgaricus (strain ATCC 11842 / DSM 20081 / BCRC 10696 / JCM 1002 / NBRC 13953 / NCIMB 11778 / NCTC 12712 / WDCM 00102 / Lb 14).